The sequence spans 205 residues: Recombination protein RecR (205 aa).

The C4-type zinc-finger motif lies at 58–75; the sequence is CSVCQNVTDRDADPCYIC. The Toprim domain occupies 83–182; it reads SVICVVESPA…SVTKIARGIP (100 aa).

The protein belongs to the RecR family.

In terms of biological role, may play a role in DNA repair. It seems to be involved in an RecBC-independent recombinational process of DNA repair. It may act with RecF and RecO. In Chlorobium limicola (strain DSM 245 / NBRC 103803 / 6330), this protein is Recombination protein RecR.